The following is a 409-amino-acid chain: Peptidase T (409 aa).

Histidine 78 is a Zn(2+) binding site. The active site involves aspartate 80. Aspartate 140 is a binding site for Zn(2+). The active-site Proton acceptor is the glutamate 173. Residues glutamate 174, aspartate 196, and histidine 379 each coordinate Zn(2+).

Belongs to the peptidase M20B family. It depends on Zn(2+) as a cofactor.

Its subcellular location is the cytoplasm. The enzyme catalyses Release of the N-terminal residue from a tripeptide.. In terms of biological role, cleaves the N-terminal amino acid of tripeptides. The polypeptide is Peptidase T (Serratia proteamaculans (strain 568)).